The sequence spans 85 residues: uncharacterized protein (85 aa).

Belongs to the herpesviridae UL91 family.

This is an uncharacterized protein from Alcelaphine herpesvirus 1 (strain C500) (AlHV-1).